The following is a 141-amino-acid chain: Hemoglobin subunit alpha-D (141 aa).

In terms of domain architecture, Globin spans 1–141; the sequence is VLTGEDKKHV…VAAVLAEKYR (141 aa). Heme b is bound by residues His-58 and His-87.

The protein belongs to the globin family. Heterotetramer of two alpha-D chains and two beta chains. Red blood cells.

Involved in oxygen transport from the lung to the various peripheral tissues. In Turdus merula (Common blackbird), this protein is Hemoglobin subunit alpha-D (HBAD).